Consider the following 270-residue polypeptide: Putative carbamate hydrolase RutD (270 aa).

This sequence belongs to the AB hydrolase superfamily. Hydrolase RutD family.

It carries out the reaction carbamate + 2 H(+) = NH4(+) + CO2. Its function is as follows. Involved in pyrimidine catabolism. May facilitate the hydrolysis of carbamate, a reaction that can also occur spontaneously. The sequence is that of Putative carbamate hydrolase RutD from Escherichia coli (strain SMS-3-5 / SECEC).